The chain runs to 369 residues: tRNA 2-selenouridine synthase (369 aa).

Residues 12-136 (FLEDTPLMDV…LRNFLFETTR (125 aa)) enclose the Rhodanese domain. Residue Cys-95 is the S-selanylcysteine intermediate of the active site.

This sequence belongs to the SelU family. In terms of assembly, monomer.

It catalyses the reaction 5-methylaminomethyl-2-thiouridine(34) in tRNA + selenophosphate + (2E)-geranyl diphosphate + H2O + H(+) = 5-methylaminomethyl-2-selenouridine(34) in tRNA + (2E)-thiogeraniol + phosphate + diphosphate. The enzyme catalyses 5-methylaminomethyl-2-thiouridine(34) in tRNA + (2E)-geranyl diphosphate = 5-methylaminomethyl-S-(2E)-geranyl-thiouridine(34) in tRNA + diphosphate. The catalysed reaction is 5-methylaminomethyl-S-(2E)-geranyl-thiouridine(34) in tRNA + selenophosphate + H(+) = 5-methylaminomethyl-2-(Se-phospho)selenouridine(34) in tRNA + (2E)-thiogeraniol. It carries out the reaction 5-methylaminomethyl-2-(Se-phospho)selenouridine(34) in tRNA + H2O = 5-methylaminomethyl-2-selenouridine(34) in tRNA + phosphate. Its function is as follows. Involved in the post-transcriptional modification of the uridine at the wobble position (U34) of tRNA(Lys), tRNA(Glu) and tRNA(Gln). Catalyzes the conversion of 2-thiouridine (S2U-RNA) to 2-selenouridine (Se2U-RNA). Acts in a two-step process involving geranylation of 2-thiouridine (S2U) to S-geranyl-2-thiouridine (geS2U) and subsequent selenation of the latter derivative to 2-selenouridine (Se2U) in the tRNA chain. The polypeptide is tRNA 2-selenouridine synthase (Pseudomonas paraeruginosa (strain DSM 24068 / PA7) (Pseudomonas aeruginosa (strain PA7))).